A 227-amino-acid chain; its full sequence is Cytochrome c oxidase subunit 2 (227 aa).

Over 1–14 the chain is Mitochondrial intermembrane; it reads MAYPFQLGLQDATS. Residues 15–45 traverse the membrane as a helical segment; that stretch reads PIMEELLHFHDHTLMIVFLISSLVLYIISLM. Over 46 to 59 the chain is Mitochondrial matrix; sequence LTTKLTHTSTMDAQ. Residues 60-87 form a helical membrane-spanning segment; that stretch reads EVETVWTILPAIILILIALPSLRILYMM. Over 88-227 the chain is Mitochondrial intermembrane; the sequence is DEINNPSLTV…YFETWSAVMV (140 aa). 6 residues coordinate Cu cation: His161, Cys196, Glu198, Cys200, His204, and Met207. Glu198 contacts Mg(2+). Tyr218 is modified (phosphotyrosine).

The protein belongs to the cytochrome c oxidase subunit 2 family. In terms of assembly, component of the cytochrome c oxidase (complex IV, CIV), a multisubunit enzyme composed of 14 subunits. The complex is composed of a catalytic core of 3 subunits MT-CO1, MT-CO2 and MT-CO3, encoded in the mitochondrial DNA, and 11 supernumerary subunits COX4I, COX5A, COX5B, COX6A, COX6B, COX6C, COX7A, COX7B, COX7C, COX8 and NDUFA4, which are encoded in the nuclear genome. The complex exists as a monomer or a dimer and forms supercomplexes (SCs) in the inner mitochondrial membrane with NADH-ubiquinone oxidoreductase (complex I, CI) and ubiquinol-cytochrome c oxidoreductase (cytochrome b-c1 complex, complex III, CIII), resulting in different assemblies (supercomplex SCI(1)III(2)IV(1) and megacomplex MCI(2)III(2)IV(2)). Found in a complex with TMEM177, COA6, COX18, COX20, SCO1 and SCO2. Interacts with TMEM177 in a COX20-dependent manner. Interacts with COX20. Interacts with COX16. Requires Cu cation as cofactor.

Its subcellular location is the mitochondrion inner membrane. The catalysed reaction is 4 Fe(II)-[cytochrome c] + O2 + 8 H(+)(in) = 4 Fe(III)-[cytochrome c] + 2 H2O + 4 H(+)(out). Functionally, component of the cytochrome c oxidase, the last enzyme in the mitochondrial electron transport chain which drives oxidative phosphorylation. The respiratory chain contains 3 multisubunit complexes succinate dehydrogenase (complex II, CII), ubiquinol-cytochrome c oxidoreductase (cytochrome b-c1 complex, complex III, CIII) and cytochrome c oxidase (complex IV, CIV), that cooperate to transfer electrons derived from NADH and succinate to molecular oxygen, creating an electrochemical gradient over the inner membrane that drives transmembrane transport and the ATP synthase. Cytochrome c oxidase is the component of the respiratory chain that catalyzes the reduction of oxygen to water. Electrons originating from reduced cytochrome c in the intermembrane space (IMS) are transferred via the dinuclear copper A center (CU(A)) of subunit 2 and heme A of subunit 1 to the active site in subunit 1, a binuclear center (BNC) formed by heme A3 and copper B (CU(B)). The BNC reduces molecular oxygen to 2 water molecules using 4 electrons from cytochrome c in the IMS and 4 protons from the mitochondrial matrix. This is Cytochrome c oxidase subunit 2 (MT-CO2) from Lycalopex sechurae (Sechuran desert fox).